The sequence spans 22 residues: Short-chain-enoyl-CoA hydratase (22 aa).

This sequence belongs to the enoyl-CoA hydratase/isomerase family.

It carries out the reaction a short-chain (3S)-3-hydroxyacyl-CoA = a short-chain (2E)-enoyl-CoA + H2O. It functions in the pathway lipid metabolism; butanoate metabolism. In Clostridium pasteurianum, this protein is Short-chain-enoyl-CoA hydratase (crt).